A 131-amino-acid polypeptide reads, in one-letter code: Snaclec A8 (131 aa).

Cystine bridges form between cysteine 2-cysteine 13, cysteine 30-cysteine 129, and cysteine 104-cysteine 121. The region spanning 9–130 is the C-type lectin domain; that stretch reads HEGHCYKVFN…CGQPYRFTCE (122 aa).

The protein belongs to the snaclec family. Heterodimer; disulfide-linked. Expressed by the venom gland.

It is found in the secreted. Its function is as follows. Interferes with one step of hemostasis (modulation of platelet aggregation, or coagulation cascade, for example). This chain is Snaclec A8, found in Macrovipera lebetinus (Levantine viper).